Consider the following 567-residue polypeptide: UPF0313 protein CTN_0332 (567 aa).

In terms of domain architecture, Radical SAM core spans 288–560 (KAIETVKFSI…NKMKENVLFK (273 aa)). [4Fe-4S] cluster-binding residues include cysteine 303, cysteine 307, and cysteine 310.

It belongs to the UPF0313 family. [4Fe-4S] cluster is required as a cofactor.

This chain is UPF0313 protein CTN_0332, found in Thermotoga neapolitana (strain ATCC 49049 / DSM 4359 / NBRC 107923 / NS-E).